A 432-amino-acid chain; its full sequence is Glutamyl-tRNA reductase (432 aa).

Residues 49–52 (TCNR), Ser-101, 106–108 (ESQ), and Gln-112 contribute to the substrate site. The active-site Nucleophile is Cys-50. Position 181–186 (181–186 (GTGETI)) interacts with NADP(+). The interval 410 to 432 (KPGYHHPTLQTTIVKTDETDPAS) is disordered.

Belongs to the glutamyl-tRNA reductase family. In terms of assembly, homodimer.

It catalyses the reaction (S)-4-amino-5-oxopentanoate + tRNA(Glu) + NADP(+) = L-glutamyl-tRNA(Glu) + NADPH + H(+). It participates in porphyrin-containing compound metabolism; protoporphyrin-IX biosynthesis; 5-aminolevulinate from L-glutamyl-tRNA(Glu): step 1/2. In terms of biological role, catalyzes the NADPH-dependent reduction of glutamyl-tRNA(Glu) to glutamate 1-semialdehyde (GSA). The sequence is that of Glutamyl-tRNA reductase from Xylella fastidiosa (strain 9a5c).